A 120-amino-acid chain; its full sequence is Response regulator receiver protein CpdR (120 aa).

A Response regulatory domain is found at 3–117 (RILLAEDDND…DLVNEIEKML (115 aa)). At D52 the chain carries 4-aspartylphosphate.

Post-translationally, is phosphorylated by ChpT-P on Asp-52.

The protein resides in the cytoplasm. In terms of biological role, component of a regulatory phosphorelay system that controls B.abortus cell growth, division, and intracellular survival inside mammalian host cells. This signaling pathway is composed of CckA, ChpT, CtrA and CpdR. CpdR is a response regulator substrate of ChpT. Unphosphorylated CpdR controls steady-state levels of CtrA in the B.abortus cell, likely via CtrA destabilization and activation of its proteolysis. This is Response regulator receiver protein CpdR from Brucella abortus (strain 2308).